The chain runs to 196 residues: SPRY domain-containing protein 7 (196 aa).

One can recognise a B30.2/SPRY domain in the interval 1–184 (MAASVFCCLR…FSEFYHTPPP (184 aa)).

This Gallus gallus (Chicken) protein is SPRY domain-containing protein 7 (SPRYD7).